The chain runs to 286 residues: Aminoglycoside N(3)-acetyltransferase III (286 aa).

The protein belongs to the antibiotic N-acetyltransferase family.

The catalysed reaction is a 2-deoxystreptamine antibiotic + acetyl-CoA = an N(3)-acetyl-2-deoxystreptamine antibiotic + CoA + H(+). Functionally, resistance to antibiotics containing the 2-deoxy-streptamine ring including gentamicin, kanamycin, tobramycin, neomycin and apramycin. The protein is Aminoglycoside N(3)-acetyltransferase III (aacC3) of Salmonella sp.